A 273-amino-acid chain; its full sequence is NH(3)-dependent NAD(+) synthetase (273 aa).

Residue 47 to 54 (GISGGQDS) coordinates ATP. A Mg(2+)-binding site is contributed by aspartate 53. Arginine 139 provides a ligand contact to deamido-NAD(+). Threonine 159 contacts ATP. Position 164 (glutamate 164) interacts with Mg(2+). Deamido-NAD(+) is bound by residues lysine 172 and aspartate 179. ATP is bound by residues lysine 188 and threonine 210. A deamido-NAD(+)-binding site is contributed by 259-260 (HK).

It belongs to the NAD synthetase family. Homodimer.

It catalyses the reaction deamido-NAD(+) + NH4(+) + ATP = AMP + diphosphate + NAD(+) + H(+). It functions in the pathway cofactor biosynthesis; NAD(+) biosynthesis; NAD(+) from deamido-NAD(+) (ammonia route): step 1/1. Functionally, catalyzes the ATP-dependent amidation of deamido-NAD to form NAD. Uses ammonia as a nitrogen source. In Staphylococcus aureus (strain N315), this protein is NH(3)-dependent NAD(+) synthetase.